A 224-amino-acid polypeptide reads, in one-letter code: Response regulator protein GraR (224 aa).

A Response regulatory domain is found at 2-115 (DILLVEDDMT…VLIAKLQAIY (114 aa)). Aspartate 51 is modified (4-aspartylphosphate). A DNA-binding region (ompR/PhoB-type) is located at residues 126–224 (KRVLSWQDAI…KIGKGYMAHG (99 aa)).

Post-translationally, phosphorylated by GraS.

It localises to the cytoplasm. Member of the two-component regulatory system GraR/GraS involved in resistance against cationic antimicrobial peptides (CAMPs). In Staphylococcus saprophyticus subsp. saprophyticus (strain ATCC 15305 / DSM 20229 / NCIMB 8711 / NCTC 7292 / S-41), this protein is Response regulator protein GraR (graR).